The following is a 626-amino-acid chain: ATP-dependent zinc metalloprotease FtsH (626 aa).

At M1–N5 the chain is on the cytoplasmic side. A helical membrane pass occupies residues L6–S26. The Periplasmic segment spans residues R27 to S98. The helical transmembrane segment at F99 to L119 threads the bilayer. Topologically, residues M120 to A626 are cytoplasmic. ATP is bound at residue G191 to T198. Zn(2+) is bound at residue H413. E414 is an active-site residue. Zn(2+)-binding residues include H417 and D491.

In the central section; belongs to the AAA ATPase family. It in the C-terminal section; belongs to the peptidase M41 family. In terms of assembly, homohexamer. Zn(2+) serves as cofactor.

Its subcellular location is the cell inner membrane. Its function is as follows. Acts as a processive, ATP-dependent zinc metallopeptidase for both cytoplasmic and membrane proteins. Plays a role in the quality control of integral membrane proteins. Absence of FtsH leads to increased sigma-32 levels, which suggests, in analogy to E.coli, that sigma-32 is a substrate for FtsH. May play a role in the general stress response, as overexpression leads to improved resistance to salt stress. The sequence is that of ATP-dependent zinc metalloprotease FtsH from Caulobacter vibrioides (strain NA1000 / CB15N) (Caulobacter crescentus).